Here is a 570-residue protein sequence, read N- to C-terminus: Probable electron transfer flavoprotein-ubiquinone oxidoreductase (570 aa).

An FAD-binding site is contributed by 13 to 27 (VVIVGAGPAGLSAAI). [4Fe-4S] cluster is bound by residues C515, C539, C542, and C545. The region spanning 530-559 (KRFQINAANCVHCKTCDIKDPSQNITWVTP) is the 4Fe-4S ferredoxin-type domain.

[4Fe-4S] cluster is required as a cofactor. It depends on FAD as a cofactor.

The catalysed reaction is a ubiquinone + reduced [electron-transfer flavoprotein] = a ubiquinol + oxidized [electron-transfer flavoprotein] + H(+). In terms of biological role, accepts electrons from ETF and reduces ubiquinone. The sequence is that of Probable electron transfer flavoprotein-ubiquinone oxidoreductase (etfD) from Acinetobacter baylyi (strain ATCC 33305 / BD413 / ADP1).